Here is a 778-residue protein sequence, read N- to C-terminus: MKQIRLLAQYYVDLMMKLGLVRFSMLLALALVVLAIVVQMAVTMVLHGQVESIDVIRSIFFGLLITPWAVYFLSVVVEQLEESRQRLSRLVQKLEEMRERDLSLNVQLKDNIAQLNQEIAVREKAEAELQETFGQLKIEIKEREETQIQLEQQSSFLRSFLDASPDLVFYRNEDKEFSGCNRAMELLTGKSEKQLVHLKPADVYSPEAAAKVIETDEKVFRHNVSLTYEQWLDYPDGRKACFEIRKVPYYDRVGKRHGLMGFGRDITERKRYQDALERASRDKTTFISTISHELRTPLNGIVGLSRILLDTELTAEQEKYLKTIHVSAVTLGNIFNDIIDMDKMERRKVQLDNQPVDFTSFLADLENLSALQAQQKGLRFNLEPTLPLPHQVITDGTRLRQILWNLISNAVKFTQQGQVTVRVRYDEGDMLHFEVEDSGIGIPQDELDKIFAMYYQVKDSHGGKPATGTGIGLAVSRRLAKNMGGDITVTSEQGKGSTFTLTIHAPSVAEEVDDAFDEDDMPLPALNVLLVEDIELNVIVARSVLEKLGNSVDVAMTGKAALEMFKPGEYDLVLLDIQLPDMTGLDISRELTKRYPREDLPPLVALTANVLKDKQEYLNAGMDDVLSKPLSVPALTAMIKKFWDTQDDEESTVTTEENSKSEALLDIPMLEQYLELVGPKLITDGLAVFEKMMPGYVNVLESNLTAQDKKGIVEEGHKIKGAAGSVGLRHLQQLGQQIQSPDLPAWEDNVGEWIEEMKEEWRHDVEVLKAWVAKATKK.

Topologically, residues 1–25 (MKQIRLLAQYYVDLMMKLGLVRFSM) are cytoplasmic. Residues 26–46 (LLALALVVLAIVVQMAVTMVL) form a helical membrane-spanning segment. The Periplasmic segment spans residues 47 to 57 (HGQVESIDVIR). The helical transmembrane segment at 58–78 (SIFFGLLITPWAVYFLSVVVE) threads the bilayer. Over 79 to 778 (QLEESRQRLS…KAWVAKATKK (700 aa)) the chain is Cytoplasmic. The PAS domain occupies 153-223 (QSSFLRSFLD…ETDEKVFRHN (71 aa)). Residues 226 to 278 (LTYEQWLDYPDGRKACFEIRKVPYYDRVGKRHGLMGFGRDITERKRYQDALER) enclose the PAC domain. A Histidine kinase domain is found at 289 to 507 (TISHELRTPL…TFTLTIHAPS (219 aa)). Residue His292 is modified to Phosphohistidine; by autocatalysis. In terms of domain architecture, Response regulatory spans 527 to 643 (NVLLVEDIEL…ALTAMIKKFW (117 aa)). Asp576 carries the post-translational modification 4-aspartylphosphate. Residues 678–771 (GPKLITDGLA…RHDVEVLKAW (94 aa)) form the HPt domain. A Phosphohistidine modification is found at His717.

In terms of processing, activation requires a sequential transfer of a phosphate group from a His in the primary transmitter domain, to an Asp in the receiver domain and to a His in the secondary transmitter domain.

Its subcellular location is the cell inner membrane. The enzyme catalyses ATP + protein L-histidine = ADP + protein N-phospho-L-histidine.. Its function is as follows. Member of the two-component regulatory system ArcB/ArcA. Sensor-regulator protein for anaerobic repression of the arc modulon. Activates ArcA via a four-step phosphorelay. ArcB can also dephosphorylate ArcA by a reverse phosphorelay involving His-717 and Asp-576. This is Aerobic respiration control sensor protein ArcB (arcB) from Escherichia coli O157:H7.